The chain runs to 243 residues: Probable fructoselysine utilization operon transcriptional repressor (243 aa).

One can recognise an HTH gntR-type domain in the interval 10-78; it reads QLLYATVRQR…QGKGTFVQSQ (69 aa). The segment at residues 38-57 is a DNA-binding region (H-T-H motif); the sequence is ENELCTQYNVSRITIRKAIS.

The protein operates within carbohydrate metabolism; fructoselysine degradation [regulation]. Its function is as follows. May regulate the transcription of the frlABCDR operon, involved in the utilization of fructoselysine and psicoselysine. The protein is Probable fructoselysine utilization operon transcriptional repressor of Escherichia coli (strain K12).